Consider the following 448-residue polypeptide: Exodeoxyribonuclease 7 large subunit (448 aa).

Belongs to the XseA family. As to quaternary structure, heterooligomer composed of large and small subunits.

It localises to the cytoplasm. It catalyses the reaction Exonucleolytic cleavage in either 5'- to 3'- or 3'- to 5'-direction to yield nucleoside 5'-phosphates.. Bidirectionally degrades single-stranded DNA into large acid-insoluble oligonucleotides, which are then degraded further into small acid-soluble oligonucleotides. The polypeptide is Exodeoxyribonuclease 7 large subunit (Tolumonas auensis (strain DSM 9187 / NBRC 110442 / TA 4)).